Consider the following 401-residue polypeptide: Lipoyl synthase 1, mitochondrial (401 aa).

A mitochondrion-targeting transit peptide spans 1-25; sequence MWSSSSSLCRNPSFRRAWLSTVTVT. The tract at residues 49-79 is disordered; that stretch reads IDDFSSTNAPTTTTHYTSSNGSPIVRQKAAP. A compositionally biased stretch (polar residues) spans 51 to 70; it reads DFSSTNAPTTTTHYTSSNGS. Residues cysteine 117, cysteine 122, cysteine 128, cysteine 148, cysteine 152, cysteine 155, and serine 376 each contribute to the [4Fe-4S] cluster site. Residues 133–365 form the Radical SAM core domain; sequence EDQTATATIM…QETAMGMGFA (233 aa).

Belongs to the radical SAM superfamily. Lipoyl synthase family. [4Fe-4S] cluster is required as a cofactor.

It is found in the mitochondrion. It catalyses the reaction [[Fe-S] cluster scaffold protein carrying a second [4Fe-4S](2+) cluster] + N(6)-octanoyl-L-lysyl-[protein] + 2 oxidized [2Fe-2S]-[ferredoxin] + 2 S-adenosyl-L-methionine + 4 H(+) = [[Fe-S] cluster scaffold protein] + N(6)-[(R)-dihydrolipoyl]-L-lysyl-[protein] + 4 Fe(3+) + 2 hydrogen sulfide + 2 5'-deoxyadenosine + 2 L-methionine + 2 reduced [2Fe-2S]-[ferredoxin]. It functions in the pathway protein modification; protein lipoylation via endogenous pathway; protein N(6)-(lipoyl)lysine from octanoyl-[acyl-carrier-protein]: step 2/2. Catalyzes the radical-mediated insertion of two sulfur atoms into the C-6 and C-8 positions of the octanoyl moiety bound to the lipoyl domains of lipoate-dependent enzymes, thereby converting the octanoylated domains into lipoylated derivatives. The protein is Lipoyl synthase 1, mitochondrial of Phaeodactylum tricornutum (strain CCAP 1055/1).